We begin with the raw amino-acid sequence, 631 residues long: UvrABC system protein C (631 aa).

The tract at residues 1 to 20 (MKNETEAVADQPPKTGPVKP) is disordered. Residues 34–112 (MSPGVYRMLD…IKQLKPKFNV (79 aa)) enclose the GIY-YIG domain. Positions 222 to 257 (TDLQRQLADGMAAASEAMEFERAAALRDRIRALTNV) constitute a UVR domain.

This sequence belongs to the UvrC family. Interacts with UvrB in an incision complex.

The protein localises to the cytoplasm. Functionally, the UvrABC repair system catalyzes the recognition and processing of DNA lesions. UvrC both incises the 5' and 3' sides of the lesion. The N-terminal half is responsible for the 3' incision and the C-terminal half is responsible for the 5' incision. The sequence is that of UvrABC system protein C from Jannaschia sp. (strain CCS1).